The chain runs to 338 residues: Methionyl-tRNA formyltransferase (338 aa).

110 to 113 (SLLP) lines the (6S)-5,6,7,8-tetrahydrofolate pocket.

It belongs to the Fmt family.

It catalyses the reaction L-methionyl-tRNA(fMet) + (6R)-10-formyltetrahydrofolate = N-formyl-L-methionyl-tRNA(fMet) + (6S)-5,6,7,8-tetrahydrofolate + H(+). In terms of biological role, attaches a formyl group to the free amino group of methionyl-tRNA(fMet). The formyl group appears to play a dual role in the initiator identity of N-formylmethionyl-tRNA by promoting its recognition by IF2 and preventing the misappropriation of this tRNA by the elongation apparatus. The chain is Methionyl-tRNA formyltransferase from Parasynechococcus marenigrum (strain WH8102).